A 175-amino-acid polypeptide reads, in one-letter code: Peptide deformylase (175 aa).

Fe cation-binding residues include Cys-98 and His-140. Residue Glu-141 is part of the active site. His-144 serves as a coordination point for Fe cation.

Belongs to the polypeptide deformylase family. Fe(2+) serves as cofactor.

The catalysed reaction is N-terminal N-formyl-L-methionyl-[peptide] + H2O = N-terminal L-methionyl-[peptide] + formate. In terms of biological role, removes the formyl group from the N-terminal Met of newly synthesized proteins. Requires at least a dipeptide for an efficient rate of reaction. N-terminal L-methionine is a prerequisite for activity but the enzyme has broad specificity at other positions. In Bradyrhizobium sp. (strain ORS 278), this protein is Peptide deformylase.